Here is a 169-residue protein sequence, read N- to C-terminus: Large ribosomal subunit protein uL10 (169 aa).

This sequence belongs to the universal ribosomal protein uL10 family. As to quaternary structure, part of the ribosomal stalk of the 50S ribosomal subunit. The N-terminus interacts with L11 and the large rRNA to form the base of the stalk. The C-terminus forms an elongated spine to which L12 dimers bind in a sequential fashion forming a multimeric L10(L12)X complex.

Its function is as follows. Forms part of the ribosomal stalk, playing a central role in the interaction of the ribosome with GTP-bound translation factors. This is Large ribosomal subunit protein uL10 from Orientia tsutsugamushi (strain Ikeda) (Rickettsia tsutsugamushi).